Consider the following 100-residue polypeptide: Insertion element IS600 uncharacterized 11 kDa protein (100 aa).

It belongs to the transposase 8 family.

The sequence is that of Insertion element IS600 uncharacterized 11 kDa protein from Shigella sonnei.